Here is a 1359-residue protein sequence, read N- to C-terminus: Probable protein NAP1 (1359 aa).

The disordered stretch occupies residues 1267-1359 (PSMKQNRADT…VSRSGPLSYK (93 aa)). 2 stretches are compositionally biased toward basic and acidic residues: residues 1272–1282 (NRADTTPRSHT) and 1300–1310 (EGDRRTGERQL).

Belongs to the HEM-1/HEM-2 family. As to quaternary structure, binds PIR.

Functionally, involved in regulation of actin and microtubule organization. Part of a WAVE complex that activates the Arp2/3 complex. The polypeptide is Probable protein NAP1 (NAP1) (Oryza sativa subsp. japonica (Rice)).